A 191-amino-acid polypeptide reads, in one-letter code: UPF0149 protein VV1_1551 (191 aa).

It belongs to the UPF0149 family.

The chain is UPF0149 protein VV1_1551 from Vibrio vulnificus (strain CMCP6).